The chain runs to 458 residues: NADH-quinone oxidoreductase subunit N (458 aa).

The next 13 membrane-spanning stretches (helical) occupy residues 3–23 (QYLF…LLFL), 29–49 (FGLI…TCTS), 64–84 (QNVK…AIAV), 92–112 (FSVL…SSTL), 147–167 (TLLG…IFVV), 188–208 (ILLF…HAWI), 222–242 (FFAV…ISNL), 265–285 (NILF…AFGQ), 291–311 (FIGF…SNSA), 320–340 (IAYA…VLML), 358–378 (VALA…FIGF), 394–414 (IPTA…YARI), and 437–457 (LLTS…VLLI).

The protein belongs to the complex I subunit 2 family. As to quaternary structure, NDH-1 is composed of 14 different subunits. Subunits NuoA, H, J, K, L, M, N constitute the membrane sector of the complex.

The protein localises to the cell inner membrane. The catalysed reaction is a quinone + NADH + 5 H(+)(in) = a quinol + NAD(+) + 4 H(+)(out). Functionally, NDH-1 shuttles electrons from NADH, via FMN and iron-sulfur (Fe-S) centers, to quinones in the respiratory chain. The immediate electron acceptor for the enzyme in this species is believed to be ubiquinone. Couples the redox reaction to proton translocation (for every two electrons transferred, four hydrogen ions are translocated across the cytoplasmic membrane), and thus conserves the redox energy in a proton gradient. This Neorickettsia risticii (strain Illinois) protein is NADH-quinone oxidoreductase subunit N.